Here is a 508-residue protein sequence, read N- to C-terminus: Argininosuccinate lyase (508 aa).

It belongs to the lyase 1 family. Argininosuccinate lyase subfamily.

It localises to the cytoplasm. The catalysed reaction is 2-(N(omega)-L-arginino)succinate = fumarate + L-arginine. It functions in the pathway amino-acid biosynthesis; L-arginine biosynthesis; L-arginine from L-ornithine and carbamoyl phosphate: step 3/3. The polypeptide is Argininosuccinate lyase (Methanopyrus kandleri (strain AV19 / DSM 6324 / JCM 9639 / NBRC 100938)).